A 240-amino-acid chain; its full sequence is MATKIFSLLMLLALSTCVANATIFPQCSQAPIASLLPPYLPSIIASICENPALQPYRLQQAIAASNIPLSPLLFQQSPALSLVQSLVQTIRAQQLQQLVLPLINQVALANLSPYSQQQQFLPFNQLSTLNPAAYLQQQLLPFSQLATAYSQQQQLLPFNQLAALNPAAYLQQQILLPFSQLAAANRASFLTQQQLLPFYQQFAANPATLLQLQQLLPFVQLALTDPAASYQQHIIGGALF.

Positions 1–21 (MATKIFSLLMLLALSTCVANA) are cleaved as a signal peptide.

This sequence belongs to the zein family. As to quaternary structure, interacts with OP10 (via N-terminus).

Zeins are major seed storage proteins. This chain is Zein-alpha 19C2, found in Zea mays (Maize).